A 335-amino-acid polypeptide reads, in one-letter code: Dolichyl-diphosphooligosaccharide--protein glycosyltransferase subunit MAGT1 (335 aa).

An N-terminal signal peptide occupies residues 1-29; that stretch reads MASPRWFWSVCAIAAVALLLVSKVPSASA. Topologically, residues 30 to 184 are extracellular; the sequence is QRKKEMVLSE…DVNIRVIRPP (155 aa). Residues 47–175 enclose the Thioredoxin domain; that stretch reads WANKRPVIRM…IARWIADRTD (129 aa). N71 carries N-linked (GlcNAc...) asparagine glycosylation. C87 and C90 are joined by a disulfide. A helical membrane pass occupies residues 185-205; that stretch reads NYAGPLMLGLLLAVIGGLVYL. At 206 to 209 the chain is on the cytoplasmic side; the sequence is RRSN. A helical transmembrane segment spans residues 210-230; sequence MEFLFNKTGWAFAALCFVLAM. Residues 231-270 are Extracellular-facing; that stretch reads TSGQMWNHIRGPPYAHKNPHTGHVNYIHGSSQAQFVAETH. A helical membrane pass occupies residues 271-291; it reads IVLLFNGGVTLGMVLLCEAAT. Residues 292–300 are Cytoplasmic-facing; the sequence is SDMDIGKRR. The chain crosses the membrane as a helical span at residues 301–321; the sequence is MMCIAGIGLVVLFFSWMLSIF. Topologically, residues 322 to 335 are extracellular; the sequence is RSKYHGYPYSFLMS.

This sequence belongs to the OST3/OST6 family. In terms of assembly, accessory component of the STT3B-containing form of the oligosaccharyltransferase (OST) complex. OST exists in two different complex forms which contain common core subunits RPN1, RPN2, OST48, OST4, DAD1 and TMEM258, either STT3A or STT3B as catalytic subunits, and form-specific accessory subunits. OST can form stable complexes with the Sec61 complex or with both the Sec61 and TRAP complexes. The association of TUSC3 or MAGT1 with the STT3B-containing complex seems to be mutually exclusvice. Expressed at high levels in kidney, colon, heart and liver. Expressed at lower levels in intestine, spleen, brain and lung.

The protein localises to the cell membrane. Its subcellular location is the endoplasmic reticulum. It localises to the endoplasmic reticulum membrane. The protein operates within protein modification; protein glycosylation. Functionally, accessory component of the STT3B-containing form of the N-oligosaccharyl transferase (OST) complex which catalyzes the transfer of a high mannose oligosaccharide from a lipid-linked oligosaccharide donor to an asparagine residue within an Asn-X-Ser/Thr consensus motif in nascent polypeptide chains. Involved in N-glycosylation of STT3B-dependent substrates. Specifically required for the glycosylation of a subset of acceptor sites that are near cysteine residues; in this function seems to act redundantly with TUSC3. In its oxidized form proposed to form transient mixed disulfides with a glycoprotein substrate to facilitate access of STT3B to the unmodified acceptor site. Also has oxidoreductase-independent functions in the STT3B-containing OST complex possibly involving substrate recognition. Could indirectly play a role in Mg(2+) transport in epithelial cells. The polypeptide is Dolichyl-diphosphooligosaccharide--protein glycosyltransferase subunit MAGT1 (Mus musculus (Mouse)).